We begin with the raw amino-acid sequence, 402 residues long: S-adenosylmethionine synthase (402 aa).

Position 140–145 (140–145 (GNGSID)) interacts with ATP.

This sequence belongs to the AdoMet synthase 2 family. The cofactor is Mg(2+).

The enzyme catalyses L-methionine + ATP + H2O = S-adenosyl-L-methionine + phosphate + diphosphate. The protein operates within amino-acid biosynthesis; S-adenosyl-L-methionine biosynthesis; S-adenosyl-L-methionine from L-methionine: step 1/1. Its function is as follows. Catalyzes the formation of S-adenosylmethionine from methionine and ATP. The protein is S-adenosylmethionine synthase of Picrophilus torridus (strain ATCC 700027 / DSM 9790 / JCM 10055 / NBRC 100828 / KAW 2/3).